The chain runs to 222 residues: Cytochrome b6 (222 aa).

Residues 39 to 59 (IFYCLGGLTLTCFLIQFATGF) form a helical membrane-spanning segment. Tyrosine 41 contacts heme b. A heme c-binding site is contributed by cysteine 42. Heme b contacts are provided by arginine 90, histidine 93, arginine 94, histidine 107, and arginine 110. 3 consecutive transmembrane segments (helical) span residues 97–117 (ASMM…TGGF), 123–143 (LTWV…VTGY), and 193–213 (LHTF…FLMI). Residues histidine 194 and histidine 209 each coordinate heme b. 2 residues coordinate heme c: arginine 214 and isoleucine 218. Serine 219 lines the heme b pocket.

This sequence belongs to the cytochrome b family. PetB subfamily. As to quaternary structure, the 4 large subunits of the cytochrome b6-f complex are cytochrome b6, subunit IV (17 kDa polypeptide, PetD), cytochrome f and the Rieske protein, while the 4 small subunits are PetG, PetL, PetM and PetN. The complex functions as a dimer. The cofactor is heme b. It depends on heme c as a cofactor.

It is found in the cellular thylakoid membrane. Component of the cytochrome b6-f complex, which mediates electron transfer between photosystem II (PSII) and photosystem I (PSI), cyclic electron flow around PSI, and state transitions. This chain is Cytochrome b6, found in Synechocystis sp. (strain ATCC 27184 / PCC 6803 / Kazusa).